Here is a 336-residue protein sequence, read N- to C-terminus: Formimidoylglutamase (336 aa).

Residues 1–10 show a composition bias toward polar residues; that stretch reads MNPNFTTEHT. A disordered region spans residues 1–22; that stretch reads MNPNFTTEHTWQGRHDPEDGQA. Positions 11–22 are enriched in basic and acidic residues; the sequence is WQGRHDPEDGQA. His-127, Asp-157, His-159, Asp-161, Asp-254, and Asp-256 together coordinate Mn(2+).

It belongs to the arginase family. Mn(2+) serves as cofactor.

The enzyme catalyses N-formimidoyl-L-glutamate + H2O = formamide + L-glutamate. Its pathway is amino-acid degradation; L-histidine degradation into L-glutamate; L-glutamate from N-formimidoyl-L-glutamate (hydrolase route): step 1/1. Catalyzes the conversion of N-formimidoyl-L-glutamate to L-glutamate and formamide. The sequence is that of Formimidoylglutamase from Vibrio cholerae serotype O1 (strain ATCC 39541 / Classical Ogawa 395 / O395).